The sequence spans 536 residues: Small conductance calcium-activated potassium channel protein 1 (536 aa).

Residues 1-90 (MSSRSHNGSV…KPPTVSHRLG (90 aa)) form a disordered region. Over residues 65-75 (QEEEEEEEDED) the composition is skewed to acidic residues. Residues 107–127 (LIFGMFGIVVMVTETELSWGV) traverse the membrane as a helical segment. Residues 136–156 (FALKCLISLSTVILLGLVILY) form a helical membrane-spanning segment. A helical transmembrane segment spans residues 224–244 (VLLSIPMFLRLYLLARVMLLH). The helical transmembrane segment at 273 to 293 (LMTICPGTVLLVFSISSWIVA) threads the bilayer. Residues 313–333 (FLGAMWLISITFLSIGYGDMV) form a helical membrane-spanning segment. An intramembrane region (pore-forming) is located at residues 342–362 (VCLLTGIMGAGCTALVVAVVA). A calmodulin-binding region spans residues 380–459 (DTQLTKRVKN…LADLAKAQSI (80 aa)). The helical transmembrane segment at 487 to 507 (VLGASLQALPSLIAQAICPLP) threads the bilayer. Residues 514 to 536 (SHLTTAAQSPQSHWLPTTASDCG) are disordered. Residues 515–536 (HLTTAAQSPQSHWLPTTASDCG) show a composition bias toward polar residues.

Belongs to the potassium channel KCNN family. KCa2.1/KCNN1 subfamily. Homodimer. Heteromultimer with KCNN2 and KCNN3. The complex is composed of 4 channel subunits each of which binds to a calmodulin subunit which regulates the channel activity through calcium-binding. Interacts with calmodulin. Widely expressed including brain.

It localises to the membrane. The protein resides in the cytoplasm. The protein localises to the myofibril. It is found in the sarcomere. Its subcellular location is the z line. The catalysed reaction is K(+)(in) = K(+)(out). Its activity is regulated as follows. Inhibited by bee venom neurotoxin apamin. Inhibited by d-tubocurarine and tetraethylammonium (TEA). In terms of biological role, small conductance calcium-activated potassium channel that mediates the voltage-independent transmembrane transfer of potassium across the cell membrane through a constitutive interaction with calmodulin which binds the intracellular calcium allowing its opening. The current is characterized by a voltage-independent activation, an intracellular calcium concentration increase-dependent activation and a single-channel conductance of about 3 picosiemens. Also presents an inwardly rectifying current, thus reducing its already small outward conductance of potassium ions, which is particularly the case when the membrane potential displays positive values, above + 20 mV. Activation is followed by membrane hyperpolarization. Thought to regulate neuronal excitability by contributing to the slow component of synaptic afterhyperpolarization. The polypeptide is Small conductance calcium-activated potassium channel protein 1 (Rattus norvegicus (Rat)).